A 295-amino-acid polypeptide reads, in one-letter code: G1/S-specific cyclin-D1 (295 aa).

Residues leucine 28–leucine 152 enclose the Cyclin N-terminal domain. The disordered stretch occupies residues alanine 262 to isoleucine 295. Lysine 269 is covalently cross-linked (Glycyl lysine isopeptide (Lys-Gly) (interchain with G-Cter in ubiquitin)). Over residues glutamate 272 to aspartate 282 the composition is skewed to acidic residues. Threonine 286 carries the post-translational modification Phosphothreonine.

This sequence belongs to the cyclin family. Cyclin D subfamily. As to quaternary structure, interacts with either CDK4 or CDK6 protein kinase to form a serine/threonine kinase holoenzyme complex. The cyclin subunit imparts substrate specificity to the complex. Component of the ternary complex CCND1/CDK4/CDKN1B required for nuclear translocation and modulation of CDK4-mediated kinase activity. Interacts directly with CDKN1B. Can form similar complexes with either CDKN1A or CDKN2A. Interacts with UHRF2; the interaction ubiquitinates CCND1 and appears to occur independently of phosphorylation. Interacts with USP2. Interacts (via cyclin N-terminal domain) with INSM1 (via N-terminal region); the interaction competes with the binding of CCND1 to CDK4 during cell cycle progression and inhibits CDK4 activity. Interacts with CDK4; the interaction is prevented with the binding of CCND1 to INSM1 during cell cycle progression. Phosphorylation at Thr-286 by MAP kinases is required for ubiquitination and degradation by the DCX(AMBRA1) complex. It also plays an essential role for recognition by the FBXO31 component of SCF (SKP1-cullin-F-box) protein ligase complex following DNA damage. Post-translationally, ubiquitinated at Lys-269 by the DCX(AMBRA1) complex during the transition from G1 to S cell phase, leading to its degradation: ubiquitination is dependent on Thr-286 phosphorylation. The DCX(AMBRA1) complex represents the major regulator of CCND1 stability during the G1/S transition. Also ubiquitinated by the SCF(FBXO4) and Cul7-RING(FBXW8) ubiquitin-protein ligase complexes. Following DNA damage it is ubiquitinated by the SCF(FBXO31) protein ligase complex. SCF(FBXO31) ubiquitination is dependent on Thr-286 phosphorylation. Ubiquitinated also by UHRF2 apparently in a phosphorylation-independent manner. Ubiquitination leads to its degradation and G1 arrest. Deubiquitinated by USP2; leading to its stabilization.

Its subcellular location is the nucleus. It is found in the cytoplasm. It localises to the nucleus membrane. Its function is as follows. Regulatory component of the cyclin D1-CDK4 (DC) complex that phosphorylates and inhibits members of the retinoblastoma (RB) protein family including RB1 and regulates the cell-cycle during G(1)/S transition. Phosphorylation of RB1 allows dissociation of the transcription factor E2F from the RB/E2F complex and the subsequent transcription of E2F target genes which are responsible for the progression through the G(1) phase. Hypophosphorylates RB1 in early G(1) phase. Cyclin D-CDK4 complexes are major integrators of various mitogenenic and antimitogenic signals. Also a substrate for SMAD3, phosphorylating SMAD3 in a cell-cycle-dependent manner and repressing its transcriptional activity. Component of the ternary complex, cyclin D1/CDK4/CDKN1B, required for nuclear translocation and activity of the cyclin D-CDK4 complex. Exhibits transcriptional corepressor activity with INSM1 on the NEUROD1 and INS promoters in a cell cycle-independent manner. The sequence is that of G1/S-specific cyclin-D1 from Homo sapiens (Human).